A 481-amino-acid chain; its full sequence is ATP synthase subunit beta, chloroplastic (481 aa).

Gly-162 to Thr-169 is a binding site for ATP.

Belongs to the ATPase alpha/beta chains family. As to quaternary structure, F-type ATPases have 2 components, F(1) - the catalytic core - and F(0) - the membrane proton channel. F(1) has five subunits: alpha(3), beta(3), gamma(1), delta(1), epsilon(1). F(0) has four main subunits: a(1), b(1), b'(1) and c(10-14). The alpha and beta chains form an alternating ring which encloses part of the gamma chain. F(1) is attached to F(0) by a central stalk formed by the gamma and epsilon chains, while a peripheral stalk is formed by the delta, b and b' chains.

The protein localises to the plastid. Its subcellular location is the chloroplast thylakoid membrane. It carries out the reaction ATP + H2O + 4 H(+)(in) = ADP + phosphate + 5 H(+)(out). Functionally, f(1)F(0) ATP synthase produces ATP from ADP in the presence of a proton or sodium gradient. F-type ATPases consist of two structural domains, F(1) containing the extramembraneous catalytic core and F(0) containing the membrane proton channel, linked together by a central stalk and a peripheral stalk. During catalysis, ATP synthesis in the catalytic domain of F(1) is coupled via a rotary mechanism of the central stalk subunits to proton translocation. In terms of biological role, produces ATP from ADP in the presence of a proton gradient across the membrane. The catalytic sites are hosted primarily by the beta subunits. In Chlamydomonas reinhardtii (Chlamydomonas smithii), this protein is ATP synthase subunit beta, chloroplastic.